Reading from the N-terminus, the 139-residue chain is Putative pre-16S rRNA nuclease (139 aa).

It belongs to the YqgF nuclease family.

It localises to the cytoplasm. Its function is as follows. Could be a nuclease involved in processing of the 5'-end of pre-16S rRNA. The chain is Putative pre-16S rRNA nuclease from Caldanaerobacter subterraneus subsp. tengcongensis (strain DSM 15242 / JCM 11007 / NBRC 100824 / MB4) (Thermoanaerobacter tengcongensis).